Reading from the N-terminus, the 339-residue chain is Ketol-acid reductoisomerase (NADP(+)) (339 aa).

Residues 1–182 (MKIYYEKDAD…GNTRAGVIET (182 aa)) form the KARI N-terminal Rossmann domain. Residues 24 to 27 (YGSQ), Ser-51, Ser-53, and 83 to 86 (DEKQ) contribute to the NADP(+) site. His-108 is a catalytic residue. Position 134 (Gly-134) interacts with NADP(+). The 146-residue stretch at 183-328 (SFREETETDL…EKLRGMMHWA (146 aa)) folds into the KARI C-terminal knotted domain. 4 residues coordinate Mg(2+): Asp-191, Glu-195, Glu-227, and Glu-231. Ser-252 is a substrate binding site.

It belongs to the ketol-acid reductoisomerase family. Mg(2+) is required as a cofactor.

The enzyme catalyses (2R)-2,3-dihydroxy-3-methylbutanoate + NADP(+) = (2S)-2-acetolactate + NADPH + H(+). It catalyses the reaction (2R,3R)-2,3-dihydroxy-3-methylpentanoate + NADP(+) = (S)-2-ethyl-2-hydroxy-3-oxobutanoate + NADPH + H(+). Its pathway is amino-acid biosynthesis; L-isoleucine biosynthesis; L-isoleucine from 2-oxobutanoate: step 2/4. The protein operates within amino-acid biosynthesis; L-valine biosynthesis; L-valine from pyruvate: step 2/4. Its function is as follows. Involved in the biosynthesis of branched-chain amino acids (BCAA). Catalyzes an alkyl-migration followed by a ketol-acid reduction of (S)-2-acetolactate (S2AL) to yield (R)-2,3-dihydroxy-isovalerate. In the isomerase reaction, S2AL is rearranged via a Mg-dependent methyl migration to produce 3-hydroxy-3-methyl-2-ketobutyrate (HMKB). In the reductase reaction, this 2-ketoacid undergoes a metal-dependent reduction by NADPH to yield (R)-2,3-dihydroxy-isovalerate. In Hyphomonas neptunium (strain ATCC 15444), this protein is Ketol-acid reductoisomerase (NADP(+)).